An 82-amino-acid polypeptide reads, in one-letter code: Beta-insect depressant toxin LqqIT2 (82 aa).

A signal peptide spans 1 to 21; it reads MKLLLLLIVSASMLIESLVNA. Residues 22 to 82 form the LCN-type CS-alpha/beta domain; that stretch reads DGYIRKRDGC…TWKSETNTCG (61 aa). Intrachain disulfides connect Cys31/Cys81, Cys35/Cys56, Cys42/Cys63, and Cys46/Cys65.

Belongs to the long (4 C-C) scorpion toxin superfamily. Sodium channel inhibitor family. Beta subfamily. As to expression, expressed by the venom gland.

It is found in the secreted. Functionally, depressant insect beta-toxins cause a transient contraction paralysis followed by a slow flaccid paralysis. They bind voltage-independently at site-4 of sodium channels and shift the voltage of activation toward more negative potentials thereby affecting sodium channel activation and promoting spontaneous and repetitive firing. Aside from typical beta-toxin effects, this toxin also affects the inactivation process and ion selectivity of the insect voltage-gated sodium channel. This toxin is active only on insects. Is active on the insect voltage-gated sodium channel para. In vivo, when injected intraperitoneally, it exhibits analgesic activity, increasing hot plate and tail flick withdrawal latencies in a dose-dependent fashion. This phenomenon might be partly due to an inhibitory mechanism activated by noxious stimuli. The protein is Beta-insect depressant toxin LqqIT2 of Leiurus quinquestriatus quinquestriatus (Egyptian scorpion).